The chain runs to 334 residues: GTP 3',8-cyclase (334 aa).

Positions 11 to 236 (GFNRKIDYLR…ESTESSQGPA (226 aa)) constitute a Radical SAM core domain. GTP is bound at residue Arg-20. Residues Cys-27 and Cys-31 each coordinate [4Fe-4S] cluster. S-adenosyl-L-methionine is bound at residue Tyr-33. Cys-34 provides a ligand contact to [4Fe-4S] cluster. GTP is bound at residue Arg-69. Gly-73 serves as a coordination point for S-adenosyl-L-methionine. Thr-100 serves as a coordination point for GTP. Ser-124 is an S-adenosyl-L-methionine binding site. Lys-161 serves as a coordination point for GTP. An S-adenosyl-L-methionine-binding site is contributed by Met-195. [4Fe-4S] cluster is bound by residues Cys-260 and Cys-263. 265-267 (RVR) contributes to the GTP binding site. Cys-277 is a [4Fe-4S] cluster binding site.

The protein belongs to the radical SAM superfamily. MoaA family. Monomer and homodimer. Requires [4Fe-4S] cluster as cofactor.

The enzyme catalyses GTP + AH2 + S-adenosyl-L-methionine = (8S)-3',8-cyclo-7,8-dihydroguanosine 5'-triphosphate + 5'-deoxyadenosine + L-methionine + A + H(+). It participates in cofactor biosynthesis; molybdopterin biosynthesis. Catalyzes the cyclization of GTP to (8S)-3',8-cyclo-7,8-dihydroguanosine 5'-triphosphate. The chain is GTP 3',8-cyclase from Pseudomonas putida (strain GB-1).